Consider the following 663-residue polypeptide: MTSHIATETSVNRWSTEPVVREEGRPPGPEDFPSTKQGREQDGNVIGITPNYKIGEQKPNSELNLGKTGSLPRGSGDYKMTYRQEDYKQTIIDPKVITNANMPYISTRIPDPRRNLAGDFPSEHSKSKIKLDPLEQRRFRSSESRPITTSNYLAESVDRHREMEASRLREYLKAKENEANQPWNKPGWPGPKKNDESLRELETMKQRIETLKRDANKGPVNAELDELSKRAEELRKRDGWSKYKLVESDIYKTDPDPMPANIKDQVRDLLESRNSVETTTTQRDHDKSGYVTDVSTATWNFSTVDYSPRSVVSMNGASHDILKDDKPRSIMKRNDLVRREQMLYPTVDTQVVKSVVKKPTVTETVQRFEETRRTEEVERRVQRREKKERRSRHHSSSRHHSGWEGHTGGYQGHRSSSLSRGGHGGGGQETYYRQETTRRQQHNNYDDNFNRGIAHARYGSLSDSLRRGELQYVPNGEVRQSFYRDGSNGGQRMHKSYSTRDVFTGDGYDDRRSVSSFRRGSQQQVSPFVEFPPTLPRRGGGGDYRREEDAYFRPVSKSRSYADWDDAGRAGMGREVRRYDDDMSRLEAEFRDSLLMPMPAGNMNERDHRTEQLPGGYETFNKERHANSGRRSGRDGKPVDFNEATQEYNYKREQTLNDDRRRR.

Residues 1–15 (MTSHIATETSVNRWS) are compositionally biased toward polar residues. Disordered regions lie at residues 1-78 (MTSH…SGDY), 367-430 (RFEE…GQET), 517-546 (FRRGSQQQVSPFVEFPPTLPRRGGGGDYRR), and 597-663 (PMPA…RRRR). Residues 367-380 (RFEETRRTEEVERR) show a composition bias toward basic and acidic residues. Basic residues predominate over residues 381-400 (VQRREKKERRSRHHSSSRHH). Polar residues predominate over residues 517 to 526 (FRRGSQQQVS). Basic and acidic residues-rich tracts occupy residues 620–640 (FNKERHANSGRRSGRDGKPVD) and 649–663 (NYKREQTLNDDRRRR).

In terms of assembly, interacts with vab-10 (via plankin domain). As to expression, isoform a: Expressed in the uterus, the vulva, the rectum, mechanosensory neurons and in head and tail neurons. Isoform e: Expressed in spermatheca and weakly in the vulva. Isoform f: Expressed in spermatheca and weakly in the vulva. Isoform i: Expressed in spermatheca and weakly in the vulva.

The protein localises to the apical cell membrane. The protein resides in the basal cell membrane. It localises to the cytoplasm. Its subcellular location is the cell junction. It is found in the hemidesmosome. The protein localises to the cell membrane. The protein resides in the cytoskeleton. Its function is as follows. Required for embryonic morphology and development. Plays both a functional and a structural role in the maintenance and probably biogenesis of fibrous organelles, a hemidesomosome-like junction structure, which ensures muscle stability and muscle connection to the external cuticle. In Caenorhabditis elegans, this protein is Protein pat-12.